The primary structure comprises 150 residues: uncharacterized protein (150 aa).

Residues valine 3 to alanine 145 enclose the Flavodoxin-like domain.

It belongs to the flavodoxin family. MioC subfamily. The cofactor is FMN.

Its function is as follows. Probable electron transporter. This is an uncharacterized protein from Pseudomonas aeruginosa (strain ATCC 15692 / DSM 22644 / CIP 104116 / JCM 14847 / LMG 12228 / 1C / PRS 101 / PAO1).